Here is a 247-residue protein sequence, read N- to C-terminus: Cell division protein ZapD (247 aa).

This sequence belongs to the ZapD family. Interacts with FtsZ.

The protein localises to the cytoplasm. Functionally, cell division factor that enhances FtsZ-ring assembly. Directly interacts with FtsZ and promotes bundling of FtsZ protofilaments, with a reduction in FtsZ GTPase activity. In Shigella dysenteriae serotype 1 (strain Sd197), this protein is Cell division protein ZapD.